The primary structure comprises 199 residues: Alpha-D-glucose 1-phosphate phosphatase YihX (199 aa).

Catalysis depends on Asp6, which acts as the Nucleophile. Mg(2+) is bound at residue Asp6. Substrate contacts are provided by residues 6-8, 107-108, Lys141, and Asp166; these read DLG and SN. Position 166 (Asp166) interacts with Mg(2+).

It belongs to the HAD-like hydrolase superfamily. YihX family. Mg(2+) serves as cofactor. It depends on Mn(2+) as a cofactor. The cofactor is Co(2+). Requires Zn(2+) as cofactor.

The catalysed reaction is alpha-D-glucose 1-phosphate + H2O = D-glucose + phosphate. Its function is as follows. Catalyzes the dephosphorylation of alpha-D-glucose 1-phosphate (Glc1P) and, to a lesser extent, of other sugar phosphates. Has no activity with the beta form of Glc1P. In addition, YihX has significant phosphatase activity against pyridoxal phosphate (PLP) and low beta-phosphoglucomutase activity. The sequence is that of Alpha-D-glucose 1-phosphate phosphatase YihX (yihX) from Escherichia coli (strain K12).